Consider the following 840-residue polypeptide: Translation initiation factor IF-2 (840 aa).

The tract at residues 1–251 (MTEEKKFSSS…GPAVPATERK (251 aa)) is disordered. Composition is skewed to polar residues over residues 38–50 (DGTN…TPRS) and 65–83 (NRHT…ASRP). A compositionally biased stretch (low complexity) spans 84–102 (NQSKSQGQGGRNNQRPGSR). 2 stretches are compositionally biased toward basic and acidic residues: residues 110-135 (PMIR…KTDN) and 158-168 (KPAEQSKKAAE). Residues 169-207 (KPAQTKPKTAETKTTATTTQSGTGKFGGALASGNNSARN) are compositionally biased toward low complexity. A compositionally biased stretch (basic residues) spans 230 to 239 (GSKKSRRIAA). Positions 341–510 (ARPPVVTIMG…LLQAEVLELK (170 aa)) constitute a tr-type G domain. The G1 stretch occupies residues 350 to 357 (GHVDHGKT). 350-357 (GHVDHGKT) contacts GTP. A G2 region spans residues 375–379 (GITQH). Residues 396 to 399 (DTPG) are G3. GTP contacts are provided by residues 396 to 400 (DTPGH) and 450 to 453 (NKID). The tract at residues 450–453 (NKID) is G4. Residues 486–488 (SAK) form a G5 region.

This sequence belongs to the TRAFAC class translation factor GTPase superfamily. Classic translation factor GTPase family. IF-2 subfamily.

It is found in the cytoplasm. In terms of biological role, one of the essential components for the initiation of protein synthesis. Protects formylmethionyl-tRNA from spontaneous hydrolysis and promotes its binding to the 30S ribosomal subunits. Also involved in the hydrolysis of GTP during the formation of the 70S ribosomal complex. The polypeptide is Translation initiation factor IF-2 (Leuconostoc citreum (strain KM20)).